The primary structure comprises 329 residues: MKFLILTALCAVTLAFVPINHQSAVETLTGQALVDYVNSAQSLFKTEHVEITEEEMKFKLMDGKYAAAHSDEIRATEQEVVLASVPATFDSRTQWSECKSIKLIRDQATCGSCWAFGAAEMISDRTCIETKGAQQPIISPDDLLSCCGSSCGNGCEGGYPIQALRWWDSKGVVTGGDYHGAGCKPYPIAPCTSGNCPESKTPSCSMSCQSGYSTAYAKDKHFGVSAYAVPKNAASIQAEIYANGPVEAAFSVYEDFYKYKSGVYKHTAGKYLGGHAIKIIGWGTESGSPYWLVANSWGVNWGESGFFKIYRGDDQCGIESAVVAGKAKV.

An N-terminal signal peptide occupies residues 1 to 15; it reads MKFLILTALCAVTLA. The propeptide at 16 to 84 is activation peptide; it reads FVPINHQSAV…ATEQEVVLAS (69 aa). Cystine bridges form between C98-C127, C110-C155, C146-C204, C147-C151, C183-C208, and C191-C196. The active site involves C113. Active-site residues include H275 and N295.

This sequence belongs to the peptidase C1 family. In terms of tissue distribution, larvae exhibit strong expression in gut cells and weak expression in hypodermal cells. Adults exhibit the reverse: strong expression in hypodermal cells and weaker expression in gut cells.

Thiol protease. Has a role as a digestive enzyme. This Caenorhabditis elegans protein is Gut-specific cysteine proteinase (cpr-1).